Reading from the N-terminus, the 1061-residue chain is Transmembrane protease serine 9 (1061 aa).

The Cytoplasmic portion of the chain corresponds to 3-31 (PAAPDLQPVPEVTKGVPVPTPDSGCCRAA). A helical membrane pass occupies residues 32-52 (VTTVVAISVASLTLGVLSAFL). Topologically, residues 53–1061 (SAQGVQVEHT…LGWIGQNIRE (1009 aa)) are extracellular. The LDL-receptor class A domain maps to 155 to 192 (HCPGNAFSCQNSQCVSKENPECDDRVDCSDGSDEAQCD). Cystine bridges form between C156–C168, C163–C182, C176–C191, and C230–C246. The region spanning 205–438 (IVGGAEAAPG…LRDWILEVTS (234 aa)) is the Peptidase S1 1 domain. Active-site charge relay system residues include H245 and D294. Intrachain disulfides connect C328–C395, C360–C374, and C385–C414. The active-site Charge relay system is the S389. Positions 443 to 499 (PVVPTEAPAPITPSTPWPTSPESRVPNTTAKPTVAPTPAPLHPSTAAKPQECGARPA) are disordered. The segment covering 452-461 (PITPSTPWPT) has biased composition (pro residues). Over residues 462 to 476 (SPESRVPNTTAKPTV) the composition is skewed to low complexity. The N-linked (GlcNAc...) asparagine glycan is linked to N469. The Peptidase S1 2 domain maps to 506 to 738 (IVGGISAVSG…LKDWILKAMS (233 aa)). A disulfide bridge connects residues C531 and C547. H546 acts as the Charge relay system in catalysis. N-linked (GlcNAc...) asparagine glycosylation occurs at N549. D594 serves as the catalytic Charge relay system. 3 disulfides stabilise this stretch: C628-C695, C660-C674, and C685-C714. N-linked (GlcNAc...) asparagine glycosylation is found at N640 and N665. S689 functions as the Charge relay system in the catalytic mechanism. Residues 740 to 752 (DPSSTAHPHTSST) are compositionally biased toward low complexity. Disordered stretches follow at residues 740-771 (DPSS…IPEA) and 790-810 (LNTT…APGT). N-linked (GlcNAc...) asparagine glycosylation occurs at N791. Low complexity predominate over residues 792–808 (TTLSARSTTTRRQTPAP). Residues 830 to 1060 (IVGGSAASLG…VLGWIGQNIR (231 aa)) enclose the Peptidase S1 3 domain. 4 disulfide bridges follow: C856-C872, C951-C1017, C982-C996, and C1007-C1036.

This sequence belongs to the peptidase S1 family. Post-translationally, proteolytically cleaved to generate 3 independent serine protease chains. The cleaved chains may remain attached to the membrane thanks to disulfide bonds. It is unclear whether cleavage always takes place.

Its subcellular location is the cell membrane. Inhibited by serine protease inhibitors PMSF and 4-(2-aminoethyl)benzenesulfonyl fluoride, but not by EDTA. Its function is as follows. Serase-1 and serase-2 are serine proteases that hydrolyze the peptides N-t-Boc-Gln-Ala-Arg-AMC and N-t-Boc-Gln-Gly-Arg-AMC. In contrast, N-t-Boc-Ala-Phe-Lys-AMC and N-t-Boc-Ala-Pro-Ala-AMC are not significantly hydrolyzed. The sequence is that of Transmembrane protease serine 9 (Tmprss9) from Rattus norvegicus (Rat).